Here is an 884-residue protein sequence, read N- to C-terminus: Protein P (884 aa).

Residues 1-184 are terminal protein domain (TP); it reads MHPFSRLFRN…GKPYSWEHRQ (184 aa). The spacer stretch occupies residues 185–387; that stretch reads LVQHNGQQHK…YCIHHIVSSL (203 aa). Disordered stretches follow at residues 218–241 and 299–345; these read PSEP…QKST and RNSG…DFSS. Composition is skewed to polar residues over residues 222-241 and 323-332; these read VSVS…QKST and YSSNSTSQRY. Residues 388 to 729 form a polymerase/reverse transcriptase domain (RT) region; the sequence is DDWGPCTVTG…YEELWPVVRQ (342 aa). The 242-residue stretch at 398–639 folds into the Reverse transcriptase domain; it reads DVTIKSPRTP…NHLHFMGYVI (242 aa). Residues aspartate 470, aspartate 590, and aspartate 591 each contribute to the Mg(2+) site.

The protein belongs to the hepadnaviridae P protein family.

The enzyme catalyses DNA(n) + a 2'-deoxyribonucleoside 5'-triphosphate = DNA(n+1) + diphosphate. It catalyses the reaction Endonucleolytic cleavage to 5'-phosphomonoester.. Its activity is regulated as follows. Activated by host HSP70 and HSP40 in vitro to be able to bind the epsilon loop of the pgRNA. Because deletion of the RNase H region renders the protein partly chaperone-independent, the chaperones may be needed indirectly to relieve occlusion of the RNA-binding site by this domain. Inhibited by several reverse-transcriptase inhibitors: Lamivudine, Adefovir and Entecavir. Multifunctional enzyme that converts the viral RNA genome into dsDNA in viral cytoplasmic capsids. This enzyme displays a DNA polymerase activity that can copy either DNA or RNA templates, and a ribonuclease H (RNase H) activity that cleaves the RNA strand of RNA-DNA heteroduplexes in a partially processive 3'- to 5'-endonucleasic mode. Neo-synthesized pregenomic RNA (pgRNA) are encapsidated together with the P protein, and reverse-transcribed inside the nucleocapsid. Initiation of reverse-transcription occurs first by binding the epsilon loop on the pgRNA genome, and is initiated by protein priming, thereby the 5'-end of (-)DNA is covalently linked to P protein. Partial (+)DNA is synthesized from the (-)DNA template and generates the relaxed circular DNA (RC-DNA) genome. After budding and infection, the RC-DNA migrates in the nucleus, and is converted into a plasmid-like covalently closed circular DNA (cccDNA). The activity of P protein does not seem to be necessary for cccDNA generation, and is presumably released from (+)DNA by host nuclear DNA repair machinery. This chain is Protein P, found in Marmota monax (Woodchuck).